The primary structure comprises 348 residues: Erlin-1 (348 aa).

Residues 1–7 lie on the Cytoplasmic side of the membrane; that stretch reads MNMTQAR. Residues 8 to 28 form a helical membrane-spanning segment; sequence VLVAAVVGLVAVLLYASIHKI. Residues 29 to 348 are Lumenal-facing; it reads EEGHLAVYYR…NVIQNKESTG (320 aa). Residue asparagine 108 is glycosylated (N-linked (GlcNAc...) asparagine). At lysine 269 the chain carries N6-acetyllysine. Positions 325–348 are disordered; it reads SSLPSKEALEPSGENVIQNKESTG. Over residues 339-348 the composition is skewed to polar residues; that stretch reads NVIQNKESTG.

The protein belongs to the band 7/mec-2 family. Forms a heteromeric complex with ERLIN2. In complex with ERLIN2, interacts with RNF170. Interacts with AMFR and SYVN1. In terms of processing, deubiquitinated by USP25; leading to stabilization. In terms of tissue distribution, expressed in heart, placenta, liver, kidney, pancreas, prostate, testis, ovary and small intestine.

The protein localises to the endoplasmic reticulum membrane. Functionally, component of the ERLIN1/ERLIN2 complex which mediates the endoplasmic reticulum-associated degradation (ERAD) of inositol 1,4,5-trisphosphate receptors (IP3Rs). Involved in regulation of cellular cholesterol homeostasis by regulation the SREBP signaling pathway. Binds cholesterol and may promote ER retention of the SCAP-SREBF complex. In terms of biological role, (Microbial infection) Required early in hepatitis C virus (HCV) infection to initiate RNA replication, and later in the infection to support infectious virus production. The sequence is that of Erlin-1 from Homo sapiens (Human).